We begin with the raw amino-acid sequence, 94 residues long: Pyrimidine/purine nucleoside phosphorylase (94 aa).

It belongs to the nucleoside phosphorylase PpnP family.

It catalyses the reaction a purine D-ribonucleoside + phosphate = a purine nucleobase + alpha-D-ribose 1-phosphate. The enzyme catalyses adenosine + phosphate = alpha-D-ribose 1-phosphate + adenine. The catalysed reaction is cytidine + phosphate = cytosine + alpha-D-ribose 1-phosphate. It carries out the reaction guanosine + phosphate = alpha-D-ribose 1-phosphate + guanine. It catalyses the reaction inosine + phosphate = alpha-D-ribose 1-phosphate + hypoxanthine. The enzyme catalyses thymidine + phosphate = 2-deoxy-alpha-D-ribose 1-phosphate + thymine. The catalysed reaction is uridine + phosphate = alpha-D-ribose 1-phosphate + uracil. It carries out the reaction xanthosine + phosphate = alpha-D-ribose 1-phosphate + xanthine. Functionally, catalyzes the phosphorolysis of diverse nucleosides, yielding D-ribose 1-phosphate and the respective free bases. Can use uridine, adenosine, guanosine, cytidine, thymidine, inosine and xanthosine as substrates. Also catalyzes the reverse reactions. The chain is Pyrimidine/purine nucleoside phosphorylase from Pseudomonas putida (strain ATCC 700007 / DSM 6899 / JCM 31910 / BCRC 17059 / LMG 24140 / F1).